The chain runs to 199 residues: Peroxiredoxin-1 (199 aa).

In terms of domain architecture, Thioredoxin spans 6 to 165; it reads AYIGKLAPDF…TLRLVQAFQF (160 aa). The active-site Cysteine sulfenic acid (-SOH) intermediate is cysteine 52.

The protein belongs to the peroxiredoxin family. AhpC/Prx1 subfamily. Homodimer; disulfide-linked, upon oxidation. 5 homodimers assemble to form a ring-like decamer. Interacts with GDPD5; forms a mixed-disulfide with GDPD5. Interacts with SESN1 and SESN2. Interacts with FAM107A. The enzyme can be inactivated by further oxidation of the cysteine sulfenic acid (C(P)-SOH) to sulphinic acid (C(P)-SO2H) instead of its condensation to a disulfide bond. It can be reactivated by forming a transient disulfide bond with sulfiredoxin SRXN1, which reduces the cysteine sulfinic acid in an ATP- and Mg-dependent manner.

The protein localises to the cytoplasm. It carries out the reaction a hydroperoxide + [thioredoxin]-dithiol = an alcohol + [thioredoxin]-disulfide + H2O. Functionally, thiol-specific peroxidase that catalyzes the reduction of hydrogen peroxide and organic hydroperoxides to water and alcohols, respectively. Plays a role in cell protection against oxidative stress by detoxifying peroxides and as sensor of hydrogen peroxide-mediated signaling events. Might participate in the signaling cascades of growth factors and tumor necrosis factor-alpha by regulating the intracellular concentrations of H(2)O(2). Reduces an intramolecular disulfide bond in GDPD5 that gates the ability to GDPD5 to drive postmitotic motor neuron differentiation. The protein is Peroxiredoxin-1 (PRDX1) of Gekko japonicus (Schlegel's Japanese gecko).